Reading from the N-terminus, the 714-residue chain is Polyribonucleotide nucleotidyltransferase (714 aa).

Residues D487 and D493 each coordinate Mg(2+). One can recognise a KH domain in the interval 554-613 (PRIETLKIPTDKIREVIGTGGKVIREIVEKTGAKINIEDDGTVKVASSDGNSIKAAIAWI). One can recognise an S1 motif domain in the interval 623 to 691 (GQIYEGTVVK…DRGKVRLSMR (69 aa)).

Belongs to the polyribonucleotide nucleotidyltransferase family. It depends on Mg(2+) as a cofactor.

The protein localises to the cytoplasm. It catalyses the reaction RNA(n+1) + phosphate = RNA(n) + a ribonucleoside 5'-diphosphate. Its function is as follows. Involved in mRNA degradation. Catalyzes the phosphorolysis of single-stranded polyribonucleotides processively in the 3'- to 5'-direction. This is Polyribonucleotide nucleotidyltransferase from Methylocella silvestris (strain DSM 15510 / CIP 108128 / LMG 27833 / NCIMB 13906 / BL2).